Reading from the N-terminus, the 210-residue chain is Guanylate kinase (210 aa).

The Guanylate kinase-like domain occupies 6-186 (GLLGIISAPS…ALIYLQSVIL (181 aa)). 13-20 (APSGAGKS) provides a ligand contact to ATP.

This sequence belongs to the guanylate kinase family.

It localises to the cytoplasm. It carries out the reaction GMP + ATP = GDP + ADP. In terms of biological role, essential for recycling GMP and indirectly, cGMP. The polypeptide is Guanylate kinase (Blochmanniella floridana).